Here is a 217-residue protein sequence, read N- to C-terminus: UPF0502 protein KPN78578_10500 (217 aa).

The protein belongs to the UPF0502 family.

The chain is UPF0502 protein KPN78578_10500 from Klebsiella pneumoniae subsp. pneumoniae (strain ATCC 700721 / MGH 78578).